A 358-amino-acid chain; its full sequence is Alanine racemase (358 aa).

Lys-35 functions as the Proton acceptor; specific for D-alanine in the catalytic mechanism. Lys-35 bears the N6-(pyridoxal phosphate)lysine mark. Position 130 (Arg-130) interacts with substrate. Tyr-255 (proton acceptor; specific for L-alanine) is an active-site residue. Position 303 (Met-303) interacts with substrate.

It belongs to the alanine racemase family. Pyridoxal 5'-phosphate serves as cofactor.

It catalyses the reaction L-alanine = D-alanine. The protein operates within amino-acid biosynthesis; D-alanine biosynthesis; D-alanine from L-alanine: step 1/1. In terms of biological role, catalyzes the interconversion of L-alanine and D-alanine. May also act on other amino acids. This chain is Alanine racemase (alr), found in Shewanella sp. (strain W3-18-1).